The following is a 665-amino-acid chain: LisH domain-containing protein ARMC9 (665 aa).

Residues 7–39 (HESELLGLVKEYLDFAEFEDTLKTFLKECKIKG) form the LisH domain. Positions 204–235 (QSNKDVLQQLHQQLVEAERRSMTYLKRYNRIQ) form a coiled coil. Ser582 is modified (phosphoserine). The segment covering 582–603 (SDDDEDEDDEEDHDTMEADLDK) has biased composition (acidic residues). Disordered regions lie at residues 582–604 (SDDD…LDKD) and 636–665 (RRGT…GYPA).

In terms of assembly, interacts with TOGARAM1, CCDC66, CEP104, CSPP1 and CEP290. Interacts with NDUFAF2.

Its subcellular location is the cytoplasm. It is found in the cytoskeleton. The protein localises to the cilium basal body. It localises to the cell projection. The protein resides in the cilium. Its subcellular location is the microtubule organizing center. It is found in the centrosome. The protein localises to the centriole. In terms of biological role, involved in ciliogenesis. It is required for appropriate acetylation and polyglutamylation of ciliary microtubules, and regulation of cilium length. Acts as a positive regulator of hedgehog (Hh)signaling. May participate in the trafficking and/or retention of GLI2 and GLI3 proteins at the ciliary tip. In Bos taurus (Bovine), this protein is LisH domain-containing protein ARMC9 (ARMC9).